The following is a 360-amino-acid chain: Methionine import ATP-binding protein MetN (360 aa).

The interval 1–22 (MSHTASTPTPEEYSAQQPSTQG) is disordered. The ABC transporter domain occupies 25-265 (VEFRGITKVF…PQTQVAQKFV (241 aa)). 62-69 (GYSGAGKS) provides a ligand contact to ATP.

Belongs to the ABC transporter superfamily. Methionine importer (TC 3.A.1.24) family. The complex is composed of two ATP-binding proteins (MetN), two transmembrane proteins (MetI) and a solute-binding protein (MetQ).

The protein resides in the cell membrane. The catalysed reaction is L-methionine(out) + ATP + H2O = L-methionine(in) + ADP + phosphate + H(+). It carries out the reaction D-methionine(out) + ATP + H2O = D-methionine(in) + ADP + phosphate + H(+). Its function is as follows. Part of the ABC transporter complex MetNIQ involved in methionine import. Responsible for energy coupling to the transport system. This Corynebacterium glutamicum (strain ATCC 13032 / DSM 20300 / JCM 1318 / BCRC 11384 / CCUG 27702 / LMG 3730 / NBRC 12168 / NCIMB 10025 / NRRL B-2784 / 534) protein is Methionine import ATP-binding protein MetN.